The sequence spans 130 residues: Small ribosomal subunit protein uS8 (130 aa).

This sequence belongs to the universal ribosomal protein uS8 family. As to quaternary structure, part of the 30S ribosomal subunit. Contacts proteins S5 and S12.

Its function is as follows. One of the primary rRNA binding proteins, it binds directly to 16S rRNA central domain where it helps coordinate assembly of the platform of the 30S subunit. This Shewanella sediminis (strain HAW-EB3) protein is Small ribosomal subunit protein uS8.